The primary structure comprises 119 residues: Beta-2-microglobulin (119 aa).

A signal peptide spans 1–20 (MARFVVVALLVLLSLSGLEA). The Ig-like C1-type domain maps to 25-114 (PKIQVYSRHP…VTLSTPKTVK (90 aa)). An intrachain disulfide couples Cys45 to Cys100.

It belongs to the beta-2-microglobulin family. As to quaternary structure, heterodimer of an alpha chain and a beta chain. Beta-2-microglobulin is the beta-chain of major histocompatibility complex class I molecules.

The protein localises to the secreted. Functionally, component of the class I major histocompatibility complex (MHC). Involved in the presentation of peptide antigens to the immune system. The chain is Beta-2-microglobulin (B2M) from Aotus azarae (Azara's night monkey).